We begin with the raw amino-acid sequence, 274 residues long: uncharacterized protein (274 aa).

Residues 1–30 (MTVYTPTSERQAPATTHRQMWALGDYAAIA) form the signal peptide.

To M.tuberculosis Rv1405c.

This is an uncharacterized protein from Mycobacterium tuberculosis (strain CDC 1551 / Oshkosh).